Consider the following 75-residue polypeptide: Sec-independent protein translocase protein TatA (75 aa).

The chain crosses the membrane as a helical span at residues 1 to 21 (MGSFSIWHWLIVLVIVVLVFG). Basic and acidic residues-rich tracts occupy residues 43 to 54 (MRDSEKSGEDVQ) and 66 to 75 (ATDKSHTVSH). The interval 43–75 (MRDSEKSGEDVQQKIGGDTLDAQATDKSHTVSH) is disordered.

Belongs to the TatA/E family. In terms of assembly, the Tat system comprises two distinct complexes: a TatABC complex, containing multiple copies of TatA, TatB and TatC subunits, and a separate TatA complex, containing only TatA subunits. Substrates initially bind to the TatABC complex, which probably triggers association of the separate TatA complex to form the active translocon.

The protein localises to the cell inner membrane. In terms of biological role, part of the twin-arginine translocation (Tat) system that transports large folded proteins containing a characteristic twin-arginine motif in their signal peptide across membranes. TatA could form the protein-conducting channel of the Tat system. The sequence is that of Sec-independent protein translocase protein TatA from Aromatoleum aromaticum (strain DSM 19018 / LMG 30748 / EbN1) (Azoarcus sp. (strain EbN1)).